The primary structure comprises 336 residues: D-alanine--D-alanine ligase (336 aa).

The region spanning 124–330 (KMWFSALGIP…FTQYLSLVIN (207 aa)) is the ATP-grasp domain. An ATP-binding site is contributed by 154 to 209 (ALEKWGSIFVKAASQGSSVGCYKVDEASKVLGVLKDAFGYAPYVIVEKTIKARELE). Residues Asp284, Glu297, and Asn299 each coordinate Mg(2+).

The protein belongs to the D-alanine--D-alanine ligase family. The cofactor is Mg(2+). Mn(2+) serves as cofactor.

Its subcellular location is the cytoplasm. It carries out the reaction 2 D-alanine + ATP = D-alanyl-D-alanine + ADP + phosphate + H(+). The protein operates within cell wall biogenesis; peptidoglycan biosynthesis. Functionally, cell wall formation. This Shewanella oneidensis (strain ATCC 700550 / JCM 31522 / CIP 106686 / LMG 19005 / NCIMB 14063 / MR-1) protein is D-alanine--D-alanine ligase.